We begin with the raw amino-acid sequence, 97 residues long: Citrate lyase acyl carrier protein (97 aa).

Ser-14 carries the post-translational modification O-(phosphoribosyl dephospho-coenzyme A)serine.

Belongs to the CitD family. Oligomer with a subunit composition of (alpha,beta,gamma)6.

It localises to the cytoplasm. Its function is as follows. Covalent carrier of the coenzyme of citrate lyase. This is Citrate lyase acyl carrier protein from Escherichia fergusonii (strain ATCC 35469 / DSM 13698 / CCUG 18766 / IAM 14443 / JCM 21226 / LMG 7866 / NBRC 102419 / NCTC 12128 / CDC 0568-73).